The following is a 240-amino-acid chain: Phosphatidylserine decarboxylase proenzyme (240 aa).

The active-site Schiff-base intermediate with substrate; via pyruvic acid is serine 198. A Pyruvic acid (Ser); by autocatalysis modification is found at serine 198.

This sequence belongs to the phosphatidylserine decarboxylase family. PSD-A subfamily. In terms of assembly, heterodimer of a large membrane-associated beta subunit and a small pyruvoyl-containing alpha subunit. Requires pyruvate as cofactor. Post-translationally, is synthesized initially as an inactive proenzyme. Formation of the active enzyme involves a self-maturation process in which the active site pyruvoyl group is generated from an internal serine residue via an autocatalytic post-translational modification. Two non-identical subunits are generated from the proenzyme in this reaction, and the pyruvate is formed at the N-terminus of the alpha chain, which is derived from the carboxyl end of the proenzyme. The post-translation cleavage follows an unusual pathway, termed non-hydrolytic serinolysis, in which the side chain hydroxyl group of the serine supplies its oxygen atom to form the C-terminus of the beta chain, while the remainder of the serine residue undergoes an oxidative deamination to produce ammonia and the pyruvoyl prosthetic group on the alpha chain.

It localises to the cell membrane. It carries out the reaction a 1,2-diacyl-sn-glycero-3-phospho-L-serine + H(+) = a 1,2-diacyl-sn-glycero-3-phosphoethanolamine + CO2. Its pathway is phospholipid metabolism; phosphatidylethanolamine biosynthesis; phosphatidylethanolamine from CDP-diacylglycerol: step 2/2. Functionally, catalyzes the formation of phosphatidylethanolamine (PtdEtn) from phosphatidylserine (PtdSer). The protein is Phosphatidylserine decarboxylase proenzyme of Paramagnetospirillum magneticum (strain ATCC 700264 / AMB-1) (Magnetospirillum magneticum).